Reading from the N-terminus, the 285-residue chain is Dermonecrotic toxin LlSicTox-alphaIII1ii (285 aa).

His12 is a catalytic residue. Residues Glu32 and Asp34 each coordinate Mg(2+). The Nucleophile role is filled by His47. A disulfide bond links Cys51 and Cys57. Asp91 is a binding site for Mg(2+).

Belongs to the arthropod phospholipase D family. Class I subfamily. Mg(2+) is required as a cofactor. As to expression, expressed by the venom gland.

The protein resides in the secreted. The catalysed reaction is an N-(acyl)-sphingosylphosphocholine = an N-(acyl)-sphingosyl-1,3-cyclic phosphate + choline. It catalyses the reaction an N-(acyl)-sphingosylphosphoethanolamine = an N-(acyl)-sphingosyl-1,3-cyclic phosphate + ethanolamine. The enzyme catalyses a 1-acyl-sn-glycero-3-phosphocholine = a 1-acyl-sn-glycero-2,3-cyclic phosphate + choline. It carries out the reaction a 1-acyl-sn-glycero-3-phosphoethanolamine = a 1-acyl-sn-glycero-2,3-cyclic phosphate + ethanolamine. Functionally, dermonecrotic toxins cleave the phosphodiester linkage between the phosphate and headgroup of certain phospholipids (sphingolipid and lysolipid substrates), forming an alcohol (often choline) and a cyclic phosphate. This toxin acts on sphingomyelin (SM) with high activity (56.8 U/mg). It may also act on ceramide phosphoethanolamine (CPE), lysophosphatidylcholine (LPC) and lysophosphatidylethanolamine (LPE), but not on lysophosphatidylserine (LPS), and lysophosphatidylglycerol (LPG). It acts by transphosphatidylation, releasing exclusively cyclic phosphate products as second products. Induces dermonecrosis, hemolysis, increased vascular permeability, edema, inflammatory response, and platelet aggregation. Is lethal to mice. In Loxosceles laeta (South American recluse spider), this protein is Dermonecrotic toxin LlSicTox-alphaIII1ii.